A 216-amino-acid polypeptide reads, in one-letter code: UDP-N-acetylglucosamine transferase subunit ALG14 (216 aa).

The Lumenal portion of the chain corresponds to 1–3; sequence MVC. The chain crosses the membrane as a helical span at residues 4–24; it reads VLVLAAAAGAVAVFLILRIWV. The Cytoplasmic segment spans residues 25–216; it reads VLRSMDVTPR…PKSVYLGRIV (192 aa).

Belongs to the ALG14 family. Forms with ALG13 the active heterodimeric UDP-N-acetylglucosamine transferase complex.

It localises to the endoplasmic reticulum membrane. In terms of biological role, part of the UDP-N-acetylglucosamine transferase complex that operates in the biosynthetic pathway of dolichol-linked oligosaccharides, the glycan precursors employed in protein asparagine (N)-glycosylation. The assembly of dolichol-linked oligosaccharides begins on the cytosolic side of the endoplasmic reticulum membrane and finishes in its lumen. The sequential addition of sugars to dolichol pyrophosphate produces dolichol-linked oligosaccharides containing fourteen sugars, including two GlcNAcs, nine mannoses and three glucoses. Once assembled, the oligosaccharides are transferred from the lipid to nascent proteins by oligosaccharyltransferases. Functions as a protein-membrane adapter recruiting ALG13 at the cytoplasmic face of the endoplasmic reticulum, where the complex catalyzes the second step of dolichol pyrophosphate biosynthesis, transferring a beta1,4-linked N-acetylglucosamine (GlcNAc) from UDP-GlcNAc to GlcNAc-pyrophosphatedolichol (Gn-PDol) to produce N,N'-diacetylchitobiosyl diphosphodolichol. N,N'-diacetylchitobiosyl diphosphodolichol is a substrate for ALG1, the following enzyme in the biosynthetic pathway. The chain is UDP-N-acetylglucosamine transferase subunit ALG14 from Homo sapiens (Human).